Here is a 152-residue protein sequence, read N- to C-terminus: Large ribosomal subunit protein bL9 (152 aa).

This sequence belongs to the bacterial ribosomal protein bL9 family.

Functionally, binds to the 23S rRNA. This chain is Large ribosomal subunit protein bL9, found in Crocosphaera subtropica (strain ATCC 51142 / BH68) (Cyanothece sp. (strain ATCC 51142)).